The chain runs to 432 residues: 3-phosphoshikimate 1-carboxyvinyltransferase (432 aa).

3-phosphoshikimate-binding residues include Lys-22, Ser-23, and Arg-27. Residue Lys-22 coordinates phosphoenolpyruvate. Phosphoenolpyruvate is bound by residues Gly-96 and Arg-127. 3-phosphoshikimate is bound by residues Ser-173, Ser-174, Gln-175, Ser-201, Asp-316, Asn-339, and Lys-343. Phosphoenolpyruvate is bound at residue Gln-175. Asp-316 serves as the catalytic Proton acceptor. Phosphoenolpyruvate contacts are provided by Arg-347, Arg-391, and Lys-416.

This sequence belongs to the EPSP synthase family. In terms of assembly, monomer.

It is found in the cytoplasm. The catalysed reaction is 3-phosphoshikimate + phosphoenolpyruvate = 5-O-(1-carboxyvinyl)-3-phosphoshikimate + phosphate. The protein operates within metabolic intermediate biosynthesis; chorismate biosynthesis; chorismate from D-erythrose 4-phosphate and phosphoenolpyruvate: step 6/7. In terms of biological role, catalyzes the transfer of the enolpyruvyl moiety of phosphoenolpyruvate (PEP) to the 5-hydroxyl of shikimate-3-phosphate (S3P) to produce enolpyruvyl shikimate-3-phosphate and inorganic phosphate. The protein is 3-phosphoshikimate 1-carboxyvinyltransferase of Haemophilus influenzae (strain 86-028NP).